The sequence spans 340 residues: Guanine nucleotide-binding protein G(I)/G(S)/G(T) subunit beta-3 (340 aa).

WD repeat units follow at residues 53–83 (GHLA…IVWD), 95–125 (LRSS…SIYN), 141–170 (AHTG…ALWD), 182–212 (GHTG…KLWD), 224–254 (GHES…RLFD), 268–298 (SIIC…NVWD), and 310–340 (GHDN…KIWN).

The protein belongs to the WD repeat G protein beta family. As to quaternary structure, g proteins are composed of 3 units, alpha, beta and gamma. Interacts with RASD2.

In terms of biological role, guanine nucleotide-binding proteins (G proteins) are involved as a modulator or transducer in various transmembrane signaling systems. The beta and gamma chains are required for the GTPase activity, for replacement of GDP by GTP, and for G protein-effector interaction. The polypeptide is Guanine nucleotide-binding protein G(I)/G(S)/G(T) subunit beta-3 (Gnb3) (Mus musculus (Mouse)).